A 1279-amino-acid polypeptide reads, in one-letter code: ATP-dependent helicase/nuclease subunit A (1279 aa).

The UvrD-like helicase ATP-binding domain maps to 4–499 (TKWTDEQRQA…VKLFKNFRSR (496 aa)). An ATP-binding site is contributed by 25-32 (AGAGAGKT). The UvrD-like helicase C-terminal domain maps to 526–853 (EEALKVGASY…RIMSIHKSKG (328 aa)).

This sequence belongs to the helicase family. AddA subfamily. Heterodimer of AddA and AddB/RexB. The cofactor is Mg(2+).

The catalysed reaction is Couples ATP hydrolysis with the unwinding of duplex DNA by translocating in the 3'-5' direction.. It catalyses the reaction ATP + H2O = ADP + phosphate + H(+). Functionally, the heterodimer acts as both an ATP-dependent DNA helicase and an ATP-dependent, dual-direction single-stranded exonuclease. Recognizes the chi site generating a DNA molecule suitable for the initiation of homologous recombination. The AddA nuclease domain is required for chi fragment generation; this subunit has the helicase and 3' -&gt; 5' nuclease activities. The chain is ATP-dependent helicase/nuclease subunit A from Clostridium botulinum (strain Langeland / NCTC 10281 / Type F).